The sequence spans 282 residues: Orotidine 5'-phosphate decarboxylase (282 aa).

The active-site Proton donor is the lysine 95.

Belongs to the OMP decarboxylase family. Type 2 subfamily.

The enzyme catalyses orotidine 5'-phosphate + H(+) = UMP + CO2. It functions in the pathway pyrimidine metabolism; UMP biosynthesis via de novo pathway; UMP from orotate: step 2/2. In Polaromonas naphthalenivorans (strain CJ2), this protein is Orotidine 5'-phosphate decarboxylase.